A 333-amino-acid polypeptide reads, in one-letter code: Photosystem II assembly protein Ycf48 (333 aa).

A signal peptide spans 1–25 (MRVKMFKPLRLVLLIAVSVLLMAAR).

The protein belongs to the Ycf48 family. Part of early PSII assembly complexes which includes D1 (psbA) and PsbI; not found in mature PSII. Binds to the lumenal side of PSII complexes. Interacts with YidC.

Its subcellular location is the cellular thylakoid lumen. Functionally, a factor required for optimal assembly of photosystem II (PSII), acting in the early stages of PSII assembly. Also plays a role in replacement of photodamaged D1 (psbA). Assists YidC in synthesis of chlorophyll-binding proteins. This is Photosystem II assembly protein Ycf48 from Synechococcus sp. (strain JA-2-3B'a(2-13)) (Cyanobacteria bacterium Yellowstone B-Prime).